The primary structure comprises 246 residues: UL16-binding protein 2 (246 aa).

The first 25 residues, 1–25 (MAAAAATKILLCLPLLLLLSGWSRA), serve as a signal peptide directing secretion. The tract at residues 29–117 (DPHSLCYDIT…IQLENYTPKE (89 aa)) is MHC class I alpha-1 like. An intrachain disulfide couples Cys-50 to Cys-66. 2 N-linked (GlcNAc...) asparagine glycosylation sites follow: Asn-68 and Asn-82. The tract at residues 118–210 (PLTLQARMSC…MDSTLEPSAG (93 aa)) is MHC class I alpha-2 like. Cys-127 and Cys-190 are disulfide-bonded. Residue Ser-216 coordinates a protein. Ser-217 carries the GPI-anchor amidated serine lipid modification. Positions 218 to 246 (GTTQLRATATTLILCCLLIILPCFILPGI) are cleaved as a propeptide — removed in mature form.

The protein belongs to the MHC class I family. In terms of assembly, interacts with KLRK1/NKG2D. Does not bind to beta2-microglobulin. As to quaternary structure, (Microbial infection) In CMV-infected cells, interacts with the viral glycoprotein UL16; this interaction causes ULBP2 retention in the endoplasmic reticulum and cis-Golgi and prevents binding to and activation of KLRK1/NKG2D, providing CMV with an immune evasion mechanism. In terms of tissue distribution, expressed in various types of cancer cell lines and in the fetus, but not in normal tissues.

The protein resides in the cell membrane. The protein localises to the endoplasmic reticulum. It is found in the secreted. Functionally, binds and activates the KLRK1/NKG2D receptor, mediating natural killer cell cytotoxicity. The protein is UL16-binding protein 2 of Homo sapiens (Human).